The primary structure comprises 166 residues: Crossover junction endodeoxyribonuclease RuvC (166 aa).

Active-site residues include Asp7, Glu67, and Asp140. Asp7, Glu67, and Asp140 together coordinate Mg(2+).

It belongs to the RuvC family. Homodimer which binds Holliday junction (HJ) DNA. The HJ becomes 2-fold symmetrical on binding to RuvC with unstacked arms; it has a different conformation from HJ DNA in complex with RuvA. In the full resolvosome a probable DNA-RuvA(4)-RuvB(12)-RuvC(2) complex forms which resolves the HJ. Requires Mg(2+) as cofactor.

It is found in the cytoplasm. It carries out the reaction Endonucleolytic cleavage at a junction such as a reciprocal single-stranded crossover between two homologous DNA duplexes (Holliday junction).. In terms of biological role, the RuvA-RuvB-RuvC complex processes Holliday junction (HJ) DNA during genetic recombination and DNA repair. Endonuclease that resolves HJ intermediates. Cleaves cruciform DNA by making single-stranded nicks across the HJ at symmetrical positions within the homologous arms, yielding a 5'-phosphate and a 3'-hydroxyl group; requires a central core of homology in the junction. The consensus cleavage sequence is 5'-(A/T)TT(C/G)-3'. Cleavage occurs on the 3'-side of the TT dinucleotide at the point of strand exchange. HJ branch migration catalyzed by RuvA-RuvB allows RuvC to scan DNA until it finds its consensus sequence, where it cleaves and resolves the cruciform DNA. In Brevibacillus brevis (strain 47 / JCM 6285 / NBRC 100599), this protein is Crossover junction endodeoxyribonuclease RuvC.